Consider the following 490-residue polypeptide: NADP-reducing hydrogenase subunit HndC (490 aa).

4Fe-4S ferredoxin-type domains follow at residues 433 to 462 (LTYT…GTKK) and 463 to 490 (QPHT…IIKQ).

It belongs to the complex I 51 kDa subunit family. In terms of assembly, heterotetramer composed of HndA, HndB, HndC and HndD subunits. HndC is probably the reducing subunit.

The catalysed reaction is H2 + NADP(+) = NADPH + H(+). Its activity is regulated as follows. Inhibited by oxygen. Catalyzes the reduction of NADP in the presence of molecular H2 to yield NADPH. The sequence is that of NADP-reducing hydrogenase subunit HndC (hndC) from Solidesulfovibrio fructosivorans (Desulfovibrio fructosivorans).